The primary structure comprises 379 residues: MLAVHFGAGNIGRGFIGSLLSQSRYNVVFVDVNEKIVQALQQKGQYEVIIAGETTQTQVVRNVSALHSQHQQNEIIDQIARADLVTTAVGPNILPLISQTIAEGLKKRLTDRPVHIIACENMIGGSEHLKTYVWEHLSEQEQTSLEDKCGFLNCAVDRIVPNQTHEDPLTVVVEPFFEWVIETKEVIGNIPHIIGAHFVDDLQPYIERKLFTVNTGHALVAYLGYRKKYETIRQAMEDQDILADVTNALRESGRVLVHQYGWNEAEHQAYIEKIVQRFINPSMTDEVTRVARSPIRKLGPNDRLIRPAMKYYECFGEVPASLAKGIAALLLFDYEGDAEAVQLQQTIKESGVEGALEKYAKLPSNHPIVVEVKKQMLYM.

3-14 lines the NAD(+) pocket; it reads AVHFGAGNIGRG.

This sequence belongs to the mannitol dehydrogenase family.

It catalyses the reaction D-mannitol 1-phosphate + NAD(+) = beta-D-fructose 6-phosphate + NADH + H(+). This Anoxybacillus flavithermus (strain DSM 21510 / WK1) protein is Mannitol-1-phosphate 5-dehydrogenase.